The primary structure comprises 336 residues: Tryptophan--tRNA ligase (336 aa).

ATP contacts are provided by residues 11-13 (TTT) and 19-20 (GN). A 'HIGH' region motif is present at residues 12-20 (TTGIPHLGN). Asp-145 contributes to the L-tryptophan binding site. ATP is bound by residues 157–159 (GRD), Leu-196, and 203–207 (KMSKS). Positions 203-207 (KMSKS) match the 'KMSKS' region motif.

The protein belongs to the class-I aminoacyl-tRNA synthetase family. In terms of assembly, homodimer.

The protein resides in the cytoplasm. The catalysed reaction is tRNA(Trp) + L-tryptophan + ATP = L-tryptophyl-tRNA(Trp) + AMP + diphosphate + H(+). In terms of biological role, catalyzes the attachment of tryptophan to tRNA(Trp). The sequence is that of Tryptophan--tRNA ligase from Neisseria meningitidis serogroup A / serotype 4A (strain DSM 15465 / Z2491).